Reading from the N-terminus, the 83-residue chain is UPF0297 protein LCK_00468 (83 aa).

It belongs to the UPF0297 family.

In Leuconostoc citreum (strain KM20), this protein is UPF0297 protein LCK_00468.